An 842-amino-acid polypeptide reads, in one-letter code: Glycogen phosphorylase, muscle form (842 aa).

An N-acetylserine modification is found at Ser-2. Phosphoserine; by PHK; in form phosphorylase A is present on Ser-15. A Phosphoserine modification is found at Ser-26. Residues Asp-43 and Tyr-76 each coordinate AMP. Phosphotyrosine is present on residues Tyr-204 and Tyr-227. 310 to 319 (RRFKSSKFGC) provides a ligand contact to AMP. The residue at position 430 (Ser-430) is a Phosphoserine. The residue at position 473 (Tyr-473) is a Phosphotyrosine. Residue Ser-514 is modified to Phosphoserine. Lys-681 is modified (N6-(pyridoxal phosphate)lysine). A phosphoserine mark is found at Ser-747 and Ser-748.

This sequence belongs to the glycogen phosphorylase family. Homodimer. Homotetramer; to form the enzymatically active phosphorylase A. Pyridoxal 5'-phosphate serves as cofactor. Post-translationally, phosphorylation of Ser-15 converts phosphorylase B (unphosphorylated) to phosphorylase A.

It catalyses the reaction [(1-&gt;4)-alpha-D-glucosyl](n) + phosphate = [(1-&gt;4)-alpha-D-glucosyl](n-1) + alpha-D-glucose 1-phosphate. With respect to regulation, allosterically regulated through the non-covalent binding of metabolites, being activated by AMP and inhibited by ATP, ADP, and glucose-6-phosphate. The activity is also controlled by post-translational modifications including phosphorylation. In terms of biological role, allosteric enzyme that catalyzes the rate-limiting step in glycogen catabolism, the phosphorolytic cleavage of glycogen to produce glucose-1-phosphate, and plays a central role in maintaining cellular and organismal glucose homeostasis. In Rattus norvegicus (Rat), this protein is Glycogen phosphorylase, muscle form.